The following is a 680-amino-acid chain: Fermitin family homolog 2 (680 aa).

The tract at residues 40 to 81 is interaction with membranes containing phosphatidylinositol phosphate; that stretch reads HIGGVMLKLVEKLDVKKDWSDHALWWEKKRTWLLKTHWTLDK. The tract at residues 141–165 is disordered; the sequence is LKKPRDPTKKKKKKLDDQSEDEALE. A phosphoserine mark is found at Ser-159, Ser-181, Ser-339, and Ser-351. One can recognise an FERM domain in the interval 189 to 661; the sequence is MTPTYDAHDG…GYIFLSTRAK (473 aa). Residues 380–476 enclose the PH domain; sequence KVFKPKKLTL…WMAACRLASK (97 aa). Residue Lys-383 coordinates a 1,2-diacyl-sn-glycero-3-phospho-(1D-myo-inositol-3,4,5-trisphosphate). Ser-666 carries the phosphoserine modification.

It belongs to the kindlin family. In terms of assembly, interacts with ILK. Interacts with FBLIM1. Interacts with ITGB1 and ITGB3. Interacts with active, unphosphorylated CTNNB1. Identified in a complex with CTNNB1 and TCF7L2/TCF4. Interacts with ITGB1; the interaction is inhibited in presence of ITGB1BP1. As to expression, ubiquitous. Found in numerous tumor tissues.

It localises to the cytoplasm. The protein localises to the cell cortex. Its subcellular location is the cytoskeleton. The protein resides in the stress fiber. It is found in the cell junction. It localises to the focal adhesion. The protein localises to the membrane. Its subcellular location is the cell projection. The protein resides in the lamellipodium membrane. It is found in the nucleus. It localises to the myofibril. The protein localises to the sarcomere. Its subcellular location is the i band. The protein resides in the cell surface. Functionally, scaffolding protein that enhances integrin activation mediated by TLN1 and/or TLN2, but activates integrins only weakly by itself. Binds to membranes enriched in phosphoinositides. Enhances integrin-mediated cell adhesion onto the extracellular matrix and cell spreading; this requires both its ability to interact with integrins and with phospholipid membranes. Required for the assembly of focal adhesions. Participates in the connection between extracellular matrix adhesion sites and the actin cytoskeleton and also in the orchestration of actin assembly and cell shape modulation. Recruits FBLIM1 to focal adhesions. Plays a role in the TGFB1 and integrin signaling pathways. Stabilizes active CTNNB1 and plays a role in the regulation of transcription mediated by CTNNB1 and TCF7L2/TCF4 and in Wnt signaling. This Homo sapiens (Human) protein is Fermitin family homolog 2 (FERMT2).